The chain runs to 429 residues: UDP-N-acetylglucosamine 1-carboxyvinyltransferase 2 (429 aa).

Residue Lys-22–Asn-23 coordinates phosphoenolpyruvate. A UDP-N-acetyl-alpha-D-glucosamine-binding site is contributed by Arg-92. Catalysis depends on Cys-116, which acts as the Proton donor. Position 116 is a 2-(S-cysteinyl)pyruvic acid O-phosphothioketal (Cys-116). UDP-N-acetyl-alpha-D-glucosamine contacts are provided by residues Arg-121–Gln-125, Asp-305, and Ile-327.

The protein belongs to the EPSP synthase family. MurA subfamily.

The protein resides in the cytoplasm. The enzyme catalyses phosphoenolpyruvate + UDP-N-acetyl-alpha-D-glucosamine = UDP-N-acetyl-3-O-(1-carboxyvinyl)-alpha-D-glucosamine + phosphate. The protein operates within cell wall biogenesis; peptidoglycan biosynthesis. Functionally, cell wall formation. Adds enolpyruvyl to UDP-N-acetylglucosamine. This chain is UDP-N-acetylglucosamine 1-carboxyvinyltransferase 2, found in Bacillus subtilis (strain 168).